The following is a 288-amino-acid chain: 4-diphosphocytidyl-2-C-methyl-D-erythritol kinase (288 aa).

Lysine 8 is a catalytic residue. ATP is bound at residue 90–100 (PVGAGLAGGSS). Residue aspartate 132 is part of the active site.

It belongs to the GHMP kinase family. IspE subfamily.

The enzyme catalyses 4-CDP-2-C-methyl-D-erythritol + ATP = 4-CDP-2-C-methyl-D-erythritol 2-phosphate + ADP + H(+). It functions in the pathway isoprenoid biosynthesis; isopentenyl diphosphate biosynthesis via DXP pathway; isopentenyl diphosphate from 1-deoxy-D-xylulose 5-phosphate: step 3/6. Catalyzes the phosphorylation of the position 2 hydroxy group of 4-diphosphocytidyl-2C-methyl-D-erythritol. The polypeptide is 4-diphosphocytidyl-2-C-methyl-D-erythritol kinase (Chlamydia trachomatis serovar A (strain ATCC VR-571B / DSM 19440 / HAR-13)).